Here is a 393-residue protein sequence, read N- to C-terminus: Pyrimidine monooxygenase RutA (393 aa).

FMN is bound by residues 79–80, Asn-145, Glu-154, 170–171, and Ser-220; these read IK and RY.

Belongs to the NtaA/SnaA/DszA monooxygenase family. RutA subfamily.

It catalyses the reaction uracil + FMNH2 + NADH + O2 = (Z)-3-ureidoacrylate + FMN + NAD(+) + H2O + H(+). It carries out the reaction thymine + FMNH2 + NADH + O2 = (Z)-2-methylureidoacrylate + FMN + NAD(+) + H2O + H(+). In terms of biological role, catalyzes the pyrimidine ring opening between N-3 and C-4 by an unusual flavin hydroperoxide-catalyzed mechanism, adding oxygen atoms in the process to yield ureidoacrylate peracid, that immediately reacts with FMN forming ureidoacrylate and FMN-N(5)-oxide. The FMN-N(5)-oxide reacts spontaneously with NADH to produce FMN. Requires the flavin reductase RutF to regenerate FMN in vivo. This chain is Pyrimidine monooxygenase RutA, found in Escherichia coli O139:H28 (strain E24377A / ETEC).